The primary structure comprises 293 residues: Nitrogenase iron protein (293 aa).

10–17 (GKGGIGKS) contributes to the ATP binding site. [4Fe-4S] cluster is bound at residue Cys98. Arg101 bears the ADP-ribosylarginine; by dinitrogenase reductase ADP-ribosyltransferase mark. Residue Cys133 participates in [4Fe-4S] cluster binding.

It belongs to the NifH/BchL/ChlL family. Homodimer. It depends on [4Fe-4S] cluster as a cofactor. The reversible ADP-ribosylation of Arg-101 inactivates the nitrogenase reductase and regulates nitrogenase activity.

The catalysed reaction is N2 + 8 reduced [2Fe-2S]-[ferredoxin] + 16 ATP + 16 H2O = H2 + 8 oxidized [2Fe-2S]-[ferredoxin] + 2 NH4(+) + 16 ADP + 16 phosphate + 6 H(+). In terms of biological role, the key enzymatic reactions in nitrogen fixation are catalyzed by the nitrogenase complex, which has 2 components: the iron protein and the molybdenum-iron protein. The chain is Nitrogenase iron protein from Stutzerimonas stutzeri (strain A1501) (Pseudomonas stutzeri).